We begin with the raw amino-acid sequence, 139 residues long: Protein shisa-5 (139 aa).

A helical membrane pass occupies residues 3-23 (FGTLVAIGVIVFAVVVITIIL).

It belongs to the shisa family.

It localises to the endoplasmic reticulum membrane. The protein resides in the nucleus membrane. Can induce apoptosis in a caspase-dependent manner and plays a role in p53/TP53-dependent apoptosis. This chain is Protein shisa-5 (Shisa5), found in Gallus gallus (Chicken).